A 238-amino-acid polypeptide reads, in one-letter code: Ribonuclease PH (238 aa).

Phosphate is bound by residues R86 and 124–126 (GTR).

The protein belongs to the RNase PH family. As to quaternary structure, homohexameric ring arranged as a trimer of dimers.

The enzyme catalyses tRNA(n+1) + phosphate = tRNA(n) + a ribonucleoside 5'-diphosphate. In terms of biological role, phosphorolytic 3'-5' exoribonuclease that plays an important role in tRNA 3'-end maturation. Removes nucleotide residues following the 3'-CCA terminus of tRNAs; can also add nucleotides to the ends of RNA molecules by using nucleoside diphosphates as substrates, but this may not be physiologically important. Probably plays a role in initiation of 16S rRNA degradation (leading to ribosome degradation) during starvation. This chain is Ribonuclease PH, found in Citrobacter koseri (strain ATCC BAA-895 / CDC 4225-83 / SGSC4696).